The following is a 179-amino-acid chain: ATP synthase subunit delta (179 aa).

Belongs to the ATPase delta chain family. In terms of assembly, F-type ATPases have 2 components, F(1) - the catalytic core - and F(0) - the membrane proton channel. F(1) has five subunits: alpha(3), beta(3), gamma(1), delta(1), epsilon(1). F(0) has three main subunits: a(1), b(2) and c(10-14). The alpha and beta chains form an alternating ring which encloses part of the gamma chain. F(1) is attached to F(0) by a central stalk formed by the gamma and epsilon chains, while a peripheral stalk is formed by the delta and b chains.

It localises to the cell membrane. Its function is as follows. F(1)F(0) ATP synthase produces ATP from ADP in the presence of a proton or sodium gradient. F-type ATPases consist of two structural domains, F(1) containing the extramembraneous catalytic core and F(0) containing the membrane proton channel, linked together by a central stalk and a peripheral stalk. During catalysis, ATP synthesis in the catalytic domain of F(1) is coupled via a rotary mechanism of the central stalk subunits to proton translocation. This protein is part of the stalk that links CF(0) to CF(1). It either transmits conformational changes from CF(0) to CF(1) or is implicated in proton conduction. The sequence is that of ATP synthase subunit delta from Staphylococcus aureus (strain USA300 / TCH1516).